The primary structure comprises 58 residues: Small ribosomal subunit protein bS21 (58 aa).

It belongs to the bacterial ribosomal protein bS21 family.

The polypeptide is Small ribosomal subunit protein bS21 (Lactobacillus acidophilus (strain ATCC 700396 / NCK56 / N2 / NCFM)).